The sequence spans 388 residues: Succinate--CoA ligase [ADP-forming] subunit beta (388 aa).

An ATP-grasp domain is found at 9–245 (KELLAGYGLP…KSQENERELK (237 aa)). ATP is bound by residues Lys46, 53–55 (GRG), Glu100, Tyr103, and Glu108. 2 residues coordinate Mg(2+): Asn200 and Asp214. Substrate-binding positions include Asn265 and 322–324 (GIV).

It belongs to the succinate/malate CoA ligase beta subunit family. As to quaternary structure, heterotetramer of two alpha and two beta subunits. Mg(2+) serves as cofactor.

It carries out the reaction succinate + ATP + CoA = succinyl-CoA + ADP + phosphate. The enzyme catalyses GTP + succinate + CoA = succinyl-CoA + GDP + phosphate. It functions in the pathway carbohydrate metabolism; tricarboxylic acid cycle; succinate from succinyl-CoA (ligase route): step 1/1. In terms of biological role, succinyl-CoA synthetase functions in the citric acid cycle (TCA), coupling the hydrolysis of succinyl-CoA to the synthesis of either ATP or GTP and thus represents the only step of substrate-level phosphorylation in the TCA. The beta subunit provides nucleotide specificity of the enzyme and binds the substrate succinate, while the binding sites for coenzyme A and phosphate are found in the alpha subunit. This Neisseria meningitidis serogroup C / serotype 2a (strain ATCC 700532 / DSM 15464 / FAM18) protein is Succinate--CoA ligase [ADP-forming] subunit beta.